The sequence spans 60 residues: MDPCECSKGGTCNCGGSCTCTNCSCTTCKKSCCPCCPSGCPKCASGCVCKGKTCDAACCQ.

The tract at residues 1–28 (MDPCECSKGGTCNCGGSCTCTNCSCTTC) is beta. A divalent metal cation is bound by residues C4, C6, C12, C14, C18, C20, C23, C25, C28, C32, C33, C35, C36, C40, C43, C47, C49, C54, C58, and C59. The tract at residues 29–60 (KKSCCPCCPSGCPKCASGCVCKGKTCDAACCQ) is alpha.

Belongs to the metallothionein superfamily. Type 1 family.

Metallothioneins have a high content of cysteine residues that bind various heavy metals. The sequence is that of Metallothionein (mt) from Perca fluviatilis (European perch).